A 436-amino-acid chain; its full sequence is Tol-Pal system protein TolB (436 aa).

The first 28 residues, 1 to 28, serve as a signal peptide directing secretion; the sequence is MEMLRRNFFRLLMVLVAGCGLIASPAKA.

The protein belongs to the TolB family. The Tol-Pal system is composed of five core proteins: the inner membrane proteins TolA, TolQ and TolR, the periplasmic protein TolB and the outer membrane protein Pal. They form a network linking the inner and outer membranes and the peptidoglycan layer.

It is found in the periplasm. Its function is as follows. Part of the Tol-Pal system, which plays a role in outer membrane invagination during cell division and is important for maintaining outer membrane integrity. This is Tol-Pal system protein TolB from Sinorhizobium medicae (strain WSM419) (Ensifer medicae).